The primary structure comprises 721 residues: Glucans biosynthesis glucosyltransferase H (721 aa).

The next 6 membrane-spanning stretches (helical) occupy residues 53–75 (VLIM…QVLQ), 85–107 (VVLV…ALAG), 404–426 (GIGA…LISL), 456–478 (WVFA…LVLI), 490–512 (LRTF…VMMV), and 567–589 (WPLL…VALL).

It belongs to the glycosyltransferase 2 family. OpgH subfamily.

The protein localises to the cell inner membrane. The protein operates within glycan metabolism; osmoregulated periplasmic glucan (OPG) biosynthesis. Its function is as follows. Involved in the biosynthesis of osmoregulated periplasmic glucans (OPGs). The sequence is that of Glucans biosynthesis glucosyltransferase H from Rhodopseudomonas palustris (strain ATCC BAA-98 / CGA009).